The primary structure comprises 291 residues: 3-hydroxy-5-phosphonooxypentane-2,4-dione thiolase (291 aa).

Lysine 203 (schiff-base intermediate with substrate) is an active-site residue.

Belongs to the DeoC/FbaB aldolase family. In terms of assembly, homodecamer.

The protein resides in the cytoplasm. It catalyses the reaction dihydroxyacetone phosphate + acetyl-CoA = 3-hydroxy-2,4-dioxopentyl phosphate + CoA. In terms of biological role, involved in the degradation of phospho-AI-2, thereby terminating induction of the lsr operon and closing the AI-2 signaling cycle. Catalyzes the transfer of an acetyl moiety from 3-hydroxy-5-phosphonooxypentane-2,4-dione to CoA to form glycerone phosphate and acetyl-CoA. The sequence is that of 3-hydroxy-5-phosphonooxypentane-2,4-dione thiolase from Yersinia enterocolitica serotype O:8 / biotype 1B (strain NCTC 13174 / 8081).